Consider the following 323-residue polypeptide: Caspase-1 (323 aa).

Positions 1–33 (MTDECVTRNYGVGIRSPNGSENRGSFIMADNTD) are excised as a propeptide. Catalysis depends on residues His154 and Cys196. A propeptide spanning residues 203–215 (GGITLEKGVTETD) is cleaved from the precursor.

This sequence belongs to the peptidase C14A family. In terms of assembly, heterotetramer that consists of two anti-parallel arranged heterodimers, each one formed by a 22 kDa (p22) and a 13 kDa (p13) subunit.

Involved in the activation cascade of caspases responsible for apoptosis execution. Proteolytically cleaves poly(ADP-ribose) polymerase (PARP). Loss of zygotic DCP-1 function causes larval lethality and melanotic tumors. The polypeptide is Caspase-1 (Dcp-1) (Drosophila melanogaster (Fruit fly)).